A 349-amino-acid chain; its full sequence is Cbb3-type cytochrome c oxidase subunit CcoP (349 aa).

The segment at 1–67 is disordered; sequence MADTDDEHAS…RVVRDRKGGR (67 aa). Over 1-96 the chain is Cytoplasmic; the sequence is MADTDDEHAS…NPLPRWWLWT (96 aa). The segment covering 16–30 has biased composition (basic and acidic residues); the sequence is NRIELERQAADEAHK. The helical transmembrane segment at 97–117 threads the bilayer; that stretch reads FYATIVWGVLYLIAYPAIPLV. The Periplasmic portion of the chain corresponds to 118-349; that stretch reads NGATQGLLGQ…AYVHSLGGGE (232 aa). Cytochrome c domains lie at 168–258 and 265–346; these read YTAN…LELG and ALAA…HSLG. Residues C181, C184, H185, M233, C278, C281, H282, and M323 each coordinate heme c.

The protein belongs to the CcoP / FixP family. Component of the cbb3-type cytochrome c oxidase at least composed of CcoN, CcoO, CcoQ and CcoP. Requires heme c as cofactor.

The protein localises to the cell inner membrane. The protein operates within energy metabolism; oxidative phosphorylation. C-type cytochrome. Part of the cbb3-type cytochrome c oxidase complex. CcoP subunit is required for transferring electrons from donor cytochrome c via its heme groups to CcoO subunit. From there, electrons are shuttled to the catalytic binuclear center of CcoN subunit where oxygen reduction takes place. The complex also functions as a proton pump. This is Cbb3-type cytochrome c oxidase subunit CcoP from Paracoccus denitrificans (strain Pd 1222).